Reading from the N-terminus, the 171-residue chain is Sec-independent protein translocase protein TatB (171 aa).

A helical membrane pass occupies residues 1–21; it reads MFDIGFSELLLVFIIGLVVLG. The segment at 117–171 is disordered; sequence KDNETAHEGVTPAAAQTQASSPEQKPETTPEPVVKPAADAEPKTAAPSPSSSDKP. A compositionally biased stretch (polar residues) spans 130-139; the sequence is AAQTQASSPE.

The protein belongs to the TatB family. In terms of assembly, the Tat system comprises two distinct complexes: a TatABC complex, containing multiple copies of TatA, TatB and TatC subunits, and a separate TatA complex, containing only TatA subunits. Substrates initially bind to the TatABC complex, which probably triggers association of the separate TatA complex to form the active translocon.

The protein resides in the cell inner membrane. Functionally, part of the twin-arginine translocation (Tat) system that transports large folded proteins containing a characteristic twin-arginine motif in their signal peptide across membranes. Together with TatC, TatB is part of a receptor directly interacting with Tat signal peptides. TatB may form an oligomeric binding site that transiently accommodates folded Tat precursor proteins before their translocation. This chain is Sec-independent protein translocase protein TatB, found in Escherichia coli O6:K15:H31 (strain 536 / UPEC).